The following is a 138-amino-acid chain: Large ribosomal subunit protein bL17 (138 aa).

This sequence belongs to the bacterial ribosomal protein bL17 family. Part of the 50S ribosomal subunit. Contacts protein L32.

This is Large ribosomal subunit protein bL17 from Bradyrhizobium diazoefficiens (strain JCM 10833 / BCRC 13528 / IAM 13628 / NBRC 14792 / USDA 110).